Consider the following 100-residue polypeptide: MKITQEEVTHVANLSKLRFSEKETAAFATTLSKIVDMVELLGEVDTTGVAPTTTMADRKTVLRPDVAEEGTDRDRLFKNVPKKDNYYIKVPAILDDGGDA.

It belongs to the GatC family. Heterotrimer of A, B and C subunits.

The enzyme catalyses L-glutamyl-tRNA(Gln) + L-glutamine + ATP + H2O = L-glutaminyl-tRNA(Gln) + L-glutamate + ADP + phosphate + H(+). It carries out the reaction L-aspartyl-tRNA(Asn) + L-glutamine + ATP + H2O = L-asparaginyl-tRNA(Asn) + L-glutamate + ADP + phosphate + 2 H(+). Allows the formation of correctly charged Asn-tRNA(Asn) or Gln-tRNA(Gln) through the transamidation of misacylated Asp-tRNA(Asn) or Glu-tRNA(Gln) in organisms which lack either or both of asparaginyl-tRNA or glutaminyl-tRNA synthetases. The reaction takes place in the presence of glutamine and ATP through an activated phospho-Asp-tRNA(Asn) or phospho-Glu-tRNA(Gln). The polypeptide is Aspartyl/glutamyl-tRNA(Asn/Gln) amidotransferase subunit C (Streptococcus pneumoniae serotype 19F (strain G54)).